The following is an 85-amino-acid chain: Small ribosomal subunit protein bS18c (85 aa).

Belongs to the bacterial ribosomal protein bS18 family. In terms of assembly, part of the 30S ribosomal subunit.

It is found in the plastid. Its subcellular location is the chloroplast. The polypeptide is Small ribosomal subunit protein bS18c (Tupiella akineta (Green alga)).